A 411-amino-acid polypeptide reads, in one-letter code: Alpha-1-antitrypsin 1-6 (411 aa).

An N-terminal signal peptide occupies residues 1-25 (MTTPFSSHGLLLLVGLCCLLLITKT). N-linked (GlcNAc...) asparagine glycans are attached at residues Asn-50, Asn-89, Asn-101, and Asn-164.

This sequence belongs to the serpin family. As to expression, expressed predominantly in epididymis where it is found in the epithelial cells of the caput, corpus and cauda epididymis.

The protein resides in the secreted. Functionally, inhibitor of serine proteases. This chain is Alpha-1-antitrypsin 1-6, found in Mus musculus (Mouse).